Here is a 1023-residue protein sequence, read N- to C-terminus: DNA polymerase (1023 aa).

The segment at 726–751 (QTDATRKHRQCTPTSNSSSDEDAPFY) is disordered.

The protein belongs to the DNA polymerase type-B family. Heterodimer with the terminal protein; this heterodimer binds to bp 9 to 18 of the genome. Forms a complex with viral pTP, DBP and hosts NFIA and POU2F1/OCT1 for initiation of replication.

The protein resides in the host nucleus. The catalysed reaction is DNA(n) + a 2'-deoxyribonucleoside 5'-triphosphate = DNA(n+1) + diphosphate. Eukaryotic-type DNA polymerase involved in viral genomic replication. DNA synthesis is protein primed, and acts in a strand displacement replication. Assembles in complex with viral pTP, DBP, host NFIA and host POU2F1/OCT1 on viral origin of replication. The polymerase covalently transfers dCMP onto pTP, thereby initiating complementary strand synthesis. The sequence is that of DNA polymerase from Bovine adenovirus B serotype 3 (BAdV-3).